Here is a 412-residue protein sequence, read N- to C-terminus: Zinc finger protein 821 (412 aa).

Residues 26 to 83 (RQAMMKTDFPGDLGSQRQAIQQLRDQDSSSSDSEGDEEETTQDEVSSHTSEEDGGVVK) are disordered. Over residues 58-67 (SEGDEEETTQ) the composition is skewed to acidic residues. C2H2-type zinc fingers lie at residues 116 to 140 (ELCQCPLCQLDCGSREQLIAHVYQH) and 150 to 172 (YMCPVCGRALSSPGSLGRHLLIH). The stretch at 257–366 (KWALRRQNEP…EKMDMMLRAQ (110 aa)) forms a coiled coil. Residues 278–319 (RTAKKSRRDNETPEEREVRRMRDREAKRLQRMQETDEQRARR) form a disordered region.

This sequence belongs to the krueppel C2H2-type zinc-finger protein family.

The protein resides in the nucleus. In terms of biological role, may be involved in transcriptional regulation. The polypeptide is Zinc finger protein 821 (ZNF821) (Homo sapiens (Human)).